Consider the following 254-residue polypeptide: Decaprenylphosphoryl-2-keto-beta-D-erythro-pentose reductase (254 aa).

Aspartate 67 contributes to the NAD(+) binding site. Tyrosine 160 acts as the Proton acceptor in catalysis. Lysine 164 lines the NAD(+) pocket.

It belongs to the short-chain dehydrogenases/reductases (SDR) family. In terms of assembly, interacts with DprE1 to form an epimerase complex.

The protein resides in the periplasm. The enzyme catalyses trans,octa-cis-decaprenylphospho-beta-D-arabinofuranose + NAD(+) = trans,octa-cis-decaprenylphospho-beta-D-erythro-pentofuranosid-2-ulose + NADH + H(+). Its pathway is cell wall biogenesis; cell wall polysaccharide biosynthesis. In terms of biological role, component of the DprE1-DprE2 complex that catalyzes the 2-step epimerization of decaprenyl-phospho-ribose (DPR) to decaprenyl-phospho-arabinose (DPA), a key precursor that serves as the arabinose donor required for the synthesis of cell-wall arabinans. DprE1 catalyzes the first step of epimerization, namely FAD-dependent oxidation of the C2' hydroxyl of DPR to yield the keto intermediate decaprenyl-phospho-2'-keto-D-arabinose (DPX). The intermediate DPX is then transferred to DprE2 subunit of the epimerase complex, most probably through a 'substrate channel' at the interface of DprE1-DprE2 complex. DprE2 then catalyzes the second step of epimerization, the NAD(+)-dependent reduction of DPX that leads to the formation of DPA. This is Decaprenylphosphoryl-2-keto-beta-D-erythro-pentose reductase from Mycobacterium bovis (strain ATCC BAA-935 / AF2122/97).